The primary structure comprises 481 residues: Ankyrin repeat, SAM and basic leucine zipper domain-containing protein 1 (481 aa).

Positions Met-1–Ala-10 are enriched in low complexity. Positions Met-1–Asp-23 are disordered. A phosphoserine mark is found at Ser-17, Ser-18, and Ser-20. 6 ANK repeats span residues Glu-45–Ser-74, Tyr-78–Phe-107, Asp-110–Ile-144, Arg-148–Ala-177, Asn-181–Leu-210, and Asp-214–Gly-243. An SAM domain is found at Ser-272 to Glu-334.

In terms of assembly, interacts with DDX4, PIWIL1, RANBP9 and TDRD1.

It localises to the cytoplasm. Plays a central role during spermatogenesis by repressing transposable elements and preventing their mobilization, which is essential for the germline integrity. Acts via the piRNA metabolic process, which mediates the repression of transposable elements during meiosis by forming complexes composed of piRNAs and Piwi proteins and governs the methylation and subsequent repression of transposons. Its association with pi-bodies suggests a participation in the primary piRNAs metabolic process. Required prior to the pachytene stage to facilitate the production of multiple types of piRNAs, including those associated with repeats involved in the regulation of retrotransposons. May act by mediating protein-protein interactions during germ cell maturation. The chain is Ankyrin repeat, SAM and basic leucine zipper domain-containing protein 1 (ASZ1) from Eulemur macaco macaco (Black lemur).